Consider the following 84-residue polypeptide: Dolichol phosphate-mannose biosynthesis regulatory protein (84 aa).

Helical transmembrane passes span 11–31 (FGLV…VILL) and 49–69 (YAVL…GLFI).

Belongs to the DPM2 family. As to quaternary structure, component of the dolichol-phosphate mannose (DPM) synthase complex composed of DPM1, DPM2 and DPM3; in the complex interacts directly with DPM3. Component of the glycosylphosphatidylinositol-N-acetylglucosaminyltransferase (GPI-GnT) complex composed at least by PIGA, PIGC, PIGH, PIGP, PIGQ, PIGY and DPM2. Interacts with PIGA, PIGC and PIGQ.

It is found in the endoplasmic reticulum membrane. It functions in the pathway protein modification; protein glycosylation. In terms of biological role, regulates the biosynthesis of dolichol phosphate-mannose. Regulatory subunit of the dolichol-phosphate mannose (DPM) synthase complex; essential for the ER localization and stable expression of DPM1. Part of the glycosylphosphatidylinositol-N-acetylglucosaminyltransferase (GPI-GnT) complex that catalyzes the transfer of N-acetylglucosamine from UDP-N-acetylglucosamine to phosphatidylinositol and participates in the first step of GPI biosynthesis. May act by regulating the GPI-GNT complex. This Rattus norvegicus (Rat) protein is Dolichol phosphate-mannose biosynthesis regulatory protein.